Consider the following 747-residue polypeptide: Ion-translocating oxidoreductase complex subunit C (747 aa).

2 4Fe-4S ferredoxin-type domains span residues 368-397 (MEPV…QQLY) and 407-436 (KARN…VQYY). Residues Cys377, Cys380, Cys383, Cys387, Cys416, Cys419, Cys422, and Cys426 each coordinate [4Fe-4S] cluster. The segment at 538 to 564 (VREERARENQTQQETPTVDVPSTELDD) is disordered.

The protein belongs to the 4Fe4S bacterial-type ferredoxin family. RnfC subfamily. In terms of assembly, the complex is composed of six subunits: RnfA, RnfB, RnfC, RnfD, RnfE and RnfG. [4Fe-4S] cluster is required as a cofactor.

The protein localises to the cell inner membrane. Part of a membrane-bound complex that couples electron transfer with translocation of ions across the membrane. The sequence is that of Ion-translocating oxidoreductase complex subunit C from Pectobacterium carotovorum subsp. carotovorum (strain PC1).